Consider the following 232-residue polypeptide: Histone H1-II (232 aa).

Residues 1–18 show a composition bias toward low complexity; the sequence is MSDPAPEVAPAAPVASPA. 2 disordered regions span residues 1–44 and 103–232; these read MSDP…PPVS and GKGA…AKKA. In terms of domain architecture, H15 spans 39-114; it reads THPPVSEMVV…GASGSFKLPA (76 aa). Basic residues-rich tracts occupy residues 149-171 and 179-232; these read SIAK…KSTK and AAKK…AKKA.

It belongs to the histone H1/H5 family.

It localises to the nucleus. The protein resides in the chromosome. In terms of biological role, histones H1 are necessary for the condensation of nucleosome chains into higher-order structures. In Glyptotendipes barbipes (Midge), this protein is Histone H1-II.